Reading from the N-terminus, the 168-residue chain is Protein SprT (168 aa).

Positions 20-166 (EKLQQANKYL…RHCQAILQLI (147 aa)) constitute a SprT-like domain. Position 78 (His78) interacts with Zn(2+). Glu79 is an active-site residue. Zn(2+) is bound at residue His82.

Belongs to the SprT family. The cofactor is Zn(2+).

It localises to the cytoplasm. The sequence is that of Protein SprT from Proteus mirabilis (strain HI4320).